The following is an 867-amino-acid chain: Glucans biosynthesis glucosyltransferase H (867 aa).

Residues 71-91 (DDEGRTQLETMPKATRSSISP) are disordered. The next 6 helical transmembrane spans lie at 139 to 156 (YILLLLTFSQTALATWYM), 194 to 216 (ILILFAILFCWISAGFWTALMGF), 518 to 540 (VMSYLSAPLWFMFLALSTALQVV), 568 to 590 (IALLASTMVLLFLPKLLSILLIW), 603 to 625 (VTISLLLEVILSVLLAPVRMLFH), and 680 to 702 (FLFWLAPIVFSLILSPFVSVFSS).

It belongs to the glycosyltransferase 2 family. OpgH subfamily.

It is found in the cell inner membrane. It participates in glycan metabolism; osmoregulated periplasmic glucan (OPG) biosynthesis. In terms of biological role, involved in the biosynthesis of osmoregulated periplasmic glucans (OPGs). In Nitrosomonas europaea (strain ATCC 19718 / CIP 103999 / KCTC 2705 / NBRC 14298), this protein is Glucans biosynthesis glucosyltransferase H.